A 220-amino-acid chain; its full sequence is Deoxyribose-phosphate aldolase (220 aa).

Aspartate 89 acts as the Proton donor/acceptor in catalysis. The active-site Schiff-base intermediate with acetaldehyde is the lysine 151. Lysine 180 (proton donor/acceptor) is an active-site residue.

It belongs to the DeoC/FbaB aldolase family. DeoC type 1 subfamily.

It localises to the cytoplasm. The catalysed reaction is 2-deoxy-D-ribose 5-phosphate = D-glyceraldehyde 3-phosphate + acetaldehyde. Its pathway is carbohydrate degradation; 2-deoxy-D-ribose 1-phosphate degradation; D-glyceraldehyde 3-phosphate and acetaldehyde from 2-deoxy-alpha-D-ribose 1-phosphate: step 2/2. Its function is as follows. Catalyzes a reversible aldol reaction between acetaldehyde and D-glyceraldehyde 3-phosphate to generate 2-deoxy-D-ribose 5-phosphate. The chain is Deoxyribose-phosphate aldolase from Staphylococcus epidermidis (strain ATCC 12228 / FDA PCI 1200).